The chain runs to 252 residues: Mitochondrial peculiar membrane protein 1 (252 aa).

The segment at 230-252 (TTTTSKGSSPQVKHKVVSVDEDN) is disordered.

The protein localises to the mitochondrion membrane. This is Mitochondrial peculiar membrane protein 1 (MPM1) from Saccharomyces cerevisiae (strain ATCC 204508 / S288c) (Baker's yeast).